A 609-amino-acid polypeptide reads, in one-letter code: Protein NRT1/ PTR FAMILY 7.1 (609 aa).

Helical transmembrane passes span 67–87 (IILL…GVNL) and 109–129 (WTGT…SYWG). A Phosphothreonine modification is found at Thr133. The next 10 membrane-spanning stretches (helical) occupy residues 136–156 (IFQV…WFFL), 173–193 (SSLG…GYGG), 216–236 (FFSY…TILV), 243–263 (LWTE…VAFL), 367–387 (PIWL…SLFV), 402–422 (IPAA…TGIY), 438–458 (MGIG…TEIQ), 474–494 (ILWQ…MYVG), 516–536 (MASM…VMAI), and 559–579 (FYFL…IFAK).

It belongs to the major facilitator superfamily. Proton-dependent oligopeptide transporter (POT/PTR) (TC 2.A.17) family. As to expression, expressed in flowers.

Its subcellular location is the membrane. The chain is Protein NRT1/ PTR FAMILY 7.1 (NPF7.1) from Arabidopsis thaliana (Mouse-ear cress).